Reading from the N-terminus, the 272-residue chain is Dermonecrotic toxin LvSicTox-alphaIC1biii (272 aa).

Histidine 5 is a catalytic residue. The Mg(2+) site is built by glutamate 25 and aspartate 27. Histidine 41 (nucleophile) is an active-site residue. Intrachain disulfides connect cysteine 45-cysteine 51 and cysteine 47-cysteine 189. Aspartate 84 serves as a coordination point for Mg(2+).

Belongs to the arthropod phospholipase D family. Class II subfamily. Mg(2+) serves as cofactor. In terms of tissue distribution, expressed by the venom gland.

It is found in the secreted. It carries out the reaction an N-(acyl)-sphingosylphosphocholine = an N-(acyl)-sphingosyl-1,3-cyclic phosphate + choline. The catalysed reaction is an N-(acyl)-sphingosylphosphoethanolamine = an N-(acyl)-sphingosyl-1,3-cyclic phosphate + ethanolamine. The enzyme catalyses a 1-acyl-sn-glycero-3-phosphocholine = a 1-acyl-sn-glycero-2,3-cyclic phosphate + choline. It catalyses the reaction a 1-acyl-sn-glycero-3-phosphoethanolamine = a 1-acyl-sn-glycero-2,3-cyclic phosphate + ethanolamine. In terms of biological role, dermonecrotic toxins cleave the phosphodiester linkage between the phosphate and headgroup of certain phospholipids (sphingolipid and lysolipid substrates), forming an alcohol (often choline) and a cyclic phosphate. This toxin acts on sphingomyelin (SM). It may also act on ceramide phosphoethanolamine (CPE), lysophosphatidylcholine (LPC) and lysophosphatidylethanolamine (LPE), but not on lysophosphatidylserine (LPS), and lysophosphatidylglycerol (LPG). It acts by transphosphatidylation, releasing exclusively cyclic phosphate products as second products. Induces dermonecrosis, hemolysis, increased vascular permeability, edema, inflammatory response, and platelet aggregation. The protein is Dermonecrotic toxin LvSicTox-alphaIC1biii of Loxosceles variegata (Recluse spider).